Reading from the N-terminus, the 182-residue chain is ATP-dependent protease subunit HslV (182 aa).

Threonine 7 is an active-site residue. Na(+)-binding residues include alanine 166, cysteine 169, and threonine 172.

The protein belongs to the peptidase T1B family. HslV subfamily. A double ring-shaped homohexamer of HslV is capped on each side by a ring-shaped HslU homohexamer. The assembly of the HslU/HslV complex is dependent on binding of ATP.

Its subcellular location is the cytoplasm. The catalysed reaction is ATP-dependent cleavage of peptide bonds with broad specificity.. Allosterically activated by HslU binding. Protease subunit of a proteasome-like degradation complex believed to be a general protein degrading machinery. The polypeptide is ATP-dependent protease subunit HslV (Albidiferax ferrireducens (strain ATCC BAA-621 / DSM 15236 / T118) (Rhodoferax ferrireducens)).